The chain runs to 69 residues: Small ribosomal subunit protein uS7 (69 aa).

Belongs to the universal ribosomal protein uS7 family. In terms of assembly, part of the 30S ribosomal subunit.

One of the primary rRNA binding proteins, it binds directly to 16S rRNA where it nucleates assembly of the head domain of the 30S subunit. Is located at the subunit interface close to the decoding center. This chain is Small ribosomal subunit protein uS7 (rps7), found in Methanococcoides methylutens.